The primary structure comprises 241 residues: Neuromodulin (241 aa).

The span at Thr-1–His-26 shows a compositional bias: basic and acidic residues. Residues Thr-1–Ala-241 are disordered. The IQ domain occupies Ala-25–Pro-54. 2 stretches are compositionally biased toward low complexity: residues Ala-80–Glu-95 and Ser-118–Ser-131. 2 stretches are compositionally biased toward basic and acidic residues: residues Ser-132–Thr-147 and Lys-159–Gln-171. Low complexity predominate over residues Ala-172 to Pro-198. 2 stretches are compositionally biased toward basic and acidic residues: residues Thr-208–Pro-220 and Glu-232–Ala-241.

Belongs to the neuromodulin family. Binds calmodulin with a greater affinity in the absence of Ca(2+) than in its presence. Post-translationally, palmitoylated. Palmitoylation is essential for plasma membrane association.

It localises to the cell membrane. It is found in the cell projection. Its subcellular location is the growth cone membrane. The protein resides in the synapse. The protein localises to the filopodium membrane. In terms of biological role, this protein is associated with nerve growth. It is a major component of the motile 'growth cones' that form the tips of elongating axons. Plays a role in axonal and dendritic filopodia induction. The sequence is that of Neuromodulin (GAP43) from Serinus canaria (Island canary).